A 168-amino-acid polypeptide reads, in one-letter code: Small ribosomal subunit protein uS8 (168 aa).

Residues 59 to 93 form a not found in other S8 sequences region; sequence EEFKKMKELAEKSPNPKMRRYLQQLIDYNKGTQYP.

It belongs to the universal ribosomal protein uS8 family. Part of the 30S ribosomal subunit. Contacts proteins S5 and S12.

Its function is as follows. One of the primary rRNA binding proteins, it binds directly to 16S rRNA central domain where it helps coordinate assembly of the platform of the 30S subunit. This chain is Small ribosomal subunit protein uS8, found in Aquifex pyrophilus.